A 233-amino-acid polypeptide reads, in one-letter code: Large ribosomal subunit protein uL1 (233 aa).

Belongs to the universal ribosomal protein uL1 family. Part of the 50S ribosomal subunit.

Its function is as follows. Binds directly to 23S rRNA. The L1 stalk is quite mobile in the ribosome, and is involved in E site tRNA release. Protein L1 is also a translational repressor protein, it controls the translation of the L11 operon by binding to its mRNA. The protein is Large ribosomal subunit protein uL1 of Pelobacter propionicus (strain DSM 2379 / NBRC 103807 / OttBd1).